The sequence spans 657 residues: MRSGDAEIKGIKPKVIEEYSLSQGSGPSNDSWKSLMSSAKDTPLQYDHMNRESLKKYFNPNAQLIEDPLDKPIQYRVCEKCGKPLALTAIVDHLENHCAGASGKSSTDPRDESTRETIRNGVESTGRNNNDDDNSNDNNNDDDDDDDNDDNEDDDDADDDDDNSNGANYKKNDSSFNPLKRSTSMESANTPNMDTKRSKTGTPQTFSSSIKKQKKVKQRNPTEKHLIDFNKQCGVELPEGGYCARSLTCKSHSMGAKRAVSGRSKPYDVLLADYHREHQTKIGAAAEKRAKQQELQKLQKQIQKEQKKHTQQQKQGQRSKQRNVNGGKSAKNGGKSTVHNGNNINEIGHVNLTPEEETTQVLNGVSRSFPLPLESTVLSSVRYRTKYFRMREMFASSFSVKPGYTSPGYGAIHSRVGCLDLDRTTDYKFRVRTPQPINHLTNQNLNPKQIQRLQQQRALQAQLLSQQQQQQQQQQQHHSPQAQAQASTQQPTQGMVPNHFPGGATNSSFNANVSSKQIQQQQQQQQHKSQDTGLTPLEIQSQQQKLRQQQLQQQKFEAAASYLANATKLMQESNQDSHLSGTHNNNSSKNGNNNLMTMKASISSPNTSVNSIQSPPSVNSVNGSGQGVSTGINVSGNNGRIEVGIGNSVNPYNGRIN.

Zn(2+) contacts are provided by Cys78, Cys81, His93, and Cys98. Disordered stretches follow at residues 98 to 225, 287 to 353, 469 to 532, and 572 to 636; these read CAGA…TEKH, EKRA…VNLT, QQQQ…SQDT, and ESNQ…NVSG. Basic and acidic residues predominate over residues 107–118; sequence TDPRDESTRETI. Over residues 131–163 the composition is skewed to acidic residues; that stretch reads DDDNSNDNNNDDDDDDDNDDNEDDDDADDDDDN. Polar residues-rich tracts occupy residues 174-193 and 200-210; these read SSFN…TPNM and TGTPQTFSSSI. In terms of domain architecture, SCA7 spans 220–286; sequence NPTEKHLIDF…EHQTKIGAAA (67 aa). Over residues 306–321 the composition is skewed to basic residues; the sequence is QKKHTQQQKQGQRSKQ. 2 stretches are compositionally biased toward low complexity: residues 325–336 and 469–493; these read NGGKSAKNGGKS and QQQQ…QPTQ. Positions 504 to 516 are enriched in polar residues; sequence ATNSSFNANVSSK. The span at 517–526 shows a compositional bias: low complexity; that stretch reads QIQQQQQQQQ. Positions 572–583 are enriched in polar residues; that stretch reads ESNQDSHLSGTH. Positions 584 to 594 are enriched in low complexity; the sequence is NNNSSKNGNNN. Residues 600 to 636 show a composition bias toward polar residues; sequence ASISSPNTSVNSIQSPPSVNSVNGSGQGVSTGINVSG.

It belongs to the ataxin-7 family. In terms of assembly, component of the 1.8 MDa SAGA (Spt-Ada-Gcn5 acetyltransferase) complex, which is composed of 19 subunits TRA1, SPT7, TAF5, NGG1/ADA3, SGF73, SPT20/ADA5, SPT8, TAF12, TAF6, HFI1/ADA1, UBP8, GCN5, ADA2, SPT3, SGF29, TAF10, TAF9, SGF11 and SUS1. The SAGA complex is composed of 4 modules, namely the HAT (histone acetyltransferase) module (GCN5, ADA2, NGG1/ADA3 and SGF29), the DUB (deubiquitinating) module (UBP8, SGF11, SGF73 and SUS1), the core or TAF (TBP-associated factor) module (TAF5, TAF6, TAF9, TAF10 and TAF12), and the Tra1 or SPT (Suppressor of Ty) module (TRA1, HFI1/ADA1, SPT3, SPT7, SPT8 and SPT20/ADA5). The Tra1/SPT module binds activators, the core module recruits TBP (TATA-binding protein), the HAT module contains the histone H3 acetyltransferase GCN5, and the DUB module comprises the histone H2B deubiquitinase UBP8. Also identified in an altered form of SAGA, named SALSA (SAGA altered, Spt8 absent) or SLIK (SAGA-like) complex, which contains a C-terminal truncated form of SPT7 and is missing SPT8. However, it has been shown that the SAGA and SAGA-like SALSA/SLIK transcriptional coactivators are structurally and biochemically equivalent.

Its subcellular location is the nucleus. It is found in the cytoplasm. Its function is as follows. Component of the transcription coactivator SAGA complex. SAGA acts as a general cofactor required for essentially all RNA polymerase II transcription. At the promoters, SAGA is required for transcription pre-initiation complex (PIC) recruitment. It influences RNA polymerase II transcriptional activity through different activities such as TBP interaction (via core/TAF module) and promoter selectivity, interaction with transcription activators (via Tra1/SPT module), and chromatin modification through histone acetylation (via HAT module) and deubiquitination (via DUB module). SAGA preferentially acetylates histones H3 (to form H3K9ac, H3K14ac, H3K18ac and H3K23ac) and H2B and deubiquitinates histone H2B. SAGA interacts with DNA via upstream activating sequences (UASs). Also identified in a modified version of SAGA named SALSA or SLIK. The cleavage of SPT7 and the absence of the SPT8 subunit in SLIK neither drive any major conformational differences in its structure compared with SAGA, nor significantly affect HAT, DUB, or DNA-binding activities. SGF73 tethers the DUB module to the rest of the SAGA complex through its central domain and activates the ubiquitin hydrolase UBP8 by maintaining its catalytic domain in an active conformation. SGF73 mediates recruitment of the TREX-2 mRNA export factors SAC3 and THP1 to SAGA, which is crucial to target TREX-2 to the nuclear pore complex (NPC) necessary for export of mRNA. Upon environmental stress, involved in the bypass of the canonical mRNA export process for the immediate export of stress-related transcripts to maintain proteostasis. The chain is SAGA complex subunit SGF73 (SGF73) from Saccharomyces cerevisiae (strain ATCC 204508 / S288c) (Baker's yeast).